Here is a 216-residue protein sequence, read N- to C-terminus: Cytidylate kinase (216 aa).

10-18 (GPAGAGKST) contacts ATP.

Belongs to the cytidylate kinase family. Type 1 subfamily.

It localises to the cytoplasm. The catalysed reaction is CMP + ATP = CDP + ADP. The enzyme catalyses dCMP + ATP = dCDP + ADP. In Clostridioides difficile (strain 630) (Peptoclostridium difficile), this protein is Cytidylate kinase.